The primary structure comprises 910 residues: MGDNPWVLQEQVLVELSEVIKNSLSENSQTRNAALNLLEKAKDIPDLNNYLTCILINATELSVSIRSAAGLLLKNNVRVSSLESGSGLQSLDYTKSTVIRGLCDPEQLIRGISGNVITTIISRWGISTWPEVLPQLMEMLSSPASTTQEGAFSALTKICEDSAQELDRDFNGTRPLDFMIPRFIELARHENPKIRTDALFCLNQFVLIQSQSLYAHIDTFLETCYALATDVSPNVRKNVCQALVYLLDVRPDKIAPSLGSIVEYMLYSTQDSDQNVALEACEFWLAIAEQPDLCSALGPYLDKIVPMLLQGMVYSDMDLLLLGNDADDYDVEDREEDIRPQHAKGKSRITLNTQGPITQQGSSNADADELEDEDEDDDEFDEDDDAFMDWNLRKCSAAALDVLSSFWKQRLLEIILPHLKQSLTSEDWKVQEAGVLAVGAIAEGCMDGMVQYLPELYPYFLSLLDSKKPLVRTITCWTLGRYSKWASCLESEEDRQKYFVPLLQGLLRMVVDNNKKVQEAGCSAFAILEEQAGPSLVPYLEPILTNLAFAFQKYQRKNVLILYDAVQTLADYVGSALNDKRYIELLITPLLQKWSMIPDDDPNLFPLFECLSSVAVALRDGFAPFAAETYARTFRILRNTLYLITTAQNDPTVDVPDRDFLVTTLDLVSGIIQALGSQVSPLLAQADPPLGQIIGICAKDEVPEVRQSAYALLGDMCMYCFDQIRPYCDALLVDMLPQMQLPLLHVSASNNAIWSAGEMALQLGKDMQQWVKPLLERLICILKSKKSNTTVLENVAITIGRLGVYNPELVAPHLELFYQPWFEIIKTVGENEEKDSAFRGFCNILACNPQALSYLLPMFVLCVAEYENPSAELRDMFQKILQGSVELFNGKASWQASPEVLAQIQAQYGV.

HEAT repeat units follow at residues 12 to 39, 44 to 82, 93 to 126, 132 to 169, 177 to 207, 220 to 247, 259 to 286, 302 to 406, 414 to 442, 454 to 481, 499 to 532, 540 to 573, 581 to 619, 627 to 677, 690 to 721, 729 to 764, 772 to 807, 815 to 848, and 857 to 888; these read VLVELSEVIKNSLSENSQTRNAALNLLE, IPDLNNYLTCILINATELSVSIRSAAGLLLKNNVRVSSL, YTKSTVIRGLCDPEQLIRGISGNVITTIISRWGI, VLPQLMEMLSSPASTTQEGAFSALTKICEDSAQELDRD, DFMIPRFIELARHENPKIRTDALFCLNQFVL, FLETCYALATDVSPNVRKNVCQALVYLL, GSIVEYMLYSTQDSDQNVALEACEFWLA, DKIV…LSSF, IILPHLKQSLTSEDWKVQEAGVLAVGAIA, PELYPYFLSLLDSKKPLVRTITCWTLGR, FVPLLQGLLRMVVDNNKKVQEAGCSAFAILEEQA, LEPILTNLAFAFQKYQRKNVLILYDAVQTLADYV, RYIELLITPLLQKWSMIPDDDPNLFPLFECLSSVAVALR, AETY…ALGS, LGQIIGICAKDEVPEVRQSAYALLGDMCMYCF, DALLVDMLPQMQLPLLHVSASNNAIWSAGEMALQLG, KPLLERLICILKSKKSNTTVLENVAITIGRLGVYNP, ELFYQPWFEIIKTVGENEEKDSAFRGFCNILACN, and PMFVLCVAEYENPSAELRDMFQKILQGSVELF. The Importin N-terminal domain maps to 34–122; that stretch reads ALNLLEKAKD…SGNVITTIIS (89 aa). Residues 333–381 form a disordered region; that stretch reads DREEDIRPQHAKGKSRITLNTQGPITQQGSSNADADELEDEDEDDDEFD. Residues 349–364 are compositionally biased toward polar residues; it reads ITLNTQGPITQQGSSN. The segment covering 366–381 has biased composition (acidic residues); the sequence is DADELEDEDEDDDEFD.

Belongs to the importin beta family. Importin beta-2 subfamily. As to quaternary structure, interacts with Ran; interacts specifically with the GTP-bound form of Ran (GTP-Ran), protecting it from GTP hydrolysis and nucleotide exchange. Interacts with nucleoporins.

The protein resides in the cytoplasm. The protein localises to the nucleus envelope. In terms of biological role, functions in nuclear protein import as nuclear transport receptor. Serves as receptor for arginine/glycine-rich nuclear localization signals (rg-NLS) and PY-NLS in cargo substrates. Its predominant cargo substrate seems to be mRNA-binding proteins. Mediates docking of the importin/substrate complex to the nuclear pore complex (NPC) through binding to repeat-containing nucleoporins. The complex is subsequently translocated through the pore by an energy requiring, Ran-dependent mechanism. At the nucleoplasmic side of the NPC, GTP-Ran binding leads to release of the cargo. The importin is re-exported from the nucleus to the cytoplasm where GTP hydrolysis releases Ran from importin. The directionality of nuclear import is thought to be conferred by an asymmetric distribution of the GTP- and GDP-bound forms of Ran between the cytoplasm and nucleus. The protein is Importin subunit beta-2 of Schizosaccharomyces pombe (strain 972 / ATCC 24843) (Fission yeast).